A 350-amino-acid polypeptide reads, in one-letter code: Secreted effector protein PipB2 (350 aa).

Pentapeptide repeat domains follow at residues 162-201 (ANLT…NLSG), 202-241 (ASLG…SLLG), 247-286 (CNCS…IMEG), and 287-326 (AVLT…TLTD).

Interacts with the host kinesin light chain (KLC), a subunit of the kinesin-1 motor complex.

Its subcellular location is the secreted. It localises to the host membrane. Effector proteins function to alter host cell physiology and promote bacterial survival in host tissues. Involved in the reorganization of late endosome/lysosome (LE/Lys) compartments in mammalian cells. Necessary and sufficient to link kinesin-1 onto the Salmonella-containing vacuole (SCV) membrane. Required for centrifugal extension of lysosomal glycoprotein-rich membrane tubules, known as Salmonella-induced filaments (Sifs), away from the SCV and toward the cell periphery. Required for virulence, but not for intracellular survival and replication in phagocytic cells. The sequence is that of Secreted effector protein PipB2 (pipB2) from Salmonella typhi.